A 345-amino-acid polypeptide reads, in one-letter code: Platelet-derived growth factor C (345 aa).

An N-terminal signal peptide occupies residues Met1–Ala22. Residues Asn25 and Asn55 are each glycosylated (N-linked (GlcNAc...) asparagine). The region spanning His46 to Val163 is the CUB domain. 4 disulfide bridges follow: Cys104-Cys124, Cys250-Cys294, Cys280-Cys335, and Cys287-Cys337.

It belongs to the PDGF/VEGF growth factor family. Homodimer; disulfide-linked. Interacts with PDGFRA homodimers, and with heterodimers formed by PDGFRA and PDGFRB. Interacts (via CUB domain) with PLAT (via kringle domain). Proteolytic removal of the N-terminal CUB domain releasing the core domain is necessary for unmasking the receptor-binding epitopes of the core domain. Cleavage after basic residues in the hinge region (region connecting the CUB and growth factor domains) gives rise to the receptor-binding form. Cleaved by PLAT and PLG. Post-translationally, sumoylated with SUMO1. In terms of processing, N-glycosylated. As to expression, expressed in the fallopian tube, vascular smooth muscle cells in kidney, breast and colon and in visceral smooth muscle of the gastrointestinal tract. Highly expressed in retinal pigment epithelia. Expressed in medulloblastoma. In the kidney, constitutively expressed in parietal epithelial cells of Bowman's capsule, tubular epithelial cells and in arterial endothelial cells (at protein level). Highly expressed in the platelets, prostate, testis and uterus. Higher expression is observed in uterine leiomyomata. Weaker expression in the spleen, thymus, heart, pancreas, liver, ovary cells and small intestine, and negligible expression in the colon and peripheral blood leukocytes.

It localises to the cytoplasm. Its subcellular location is the cytosol. It is found in the secreted. The protein localises to the nucleus. The protein resides in the cytoplasmic granule. It localises to the cell membrane. Functionally, growth factor that plays an essential role in the regulation of embryonic development, cell proliferation, cell migration, survival and chemotaxis. Potent mitogen and chemoattractant for cells of mesenchymal origin. Required for normal skeleton formation during embryonic development, especially for normal development of the craniofacial skeleton and for normal development of the palate. Required for normal skin morphogenesis during embryonic development. Plays an important role in wound healing, where it appears to be involved in three stages: inflammation, proliferation and remodeling. Plays an important role in angiogenesis and blood vessel development. Involved in fibrotic processes, in which transformation of interstitial fibroblasts into myofibroblasts plus collagen deposition occurs. The CUB domain has mitogenic activity in coronary artery smooth muscle cells, suggesting a role beyond the maintenance of the latency of the PDGF domain. In the nucleus, PDGFC seems to have additional function. The protein is Platelet-derived growth factor C (PDGFC) of Homo sapiens (Human).